Reading from the N-terminus, the 325-residue chain is Beta-ketoacyl-[acyl-carrier-protein] synthase III 2 (325 aa).

Residues Cys-113 and His-250 contribute to the active site. Positions 251–255 (SANLR) are ACP-binding. The active site involves Asn-280.

The protein belongs to the thiolase-like superfamily. FabH family. In terms of assembly, homodimer.

Its subcellular location is the cytoplasm. The catalysed reaction is 3-methylbutanoyl-CoA + malonyl-[ACP] + H(+) = 5-methyl-3-oxohexanoyl-[ACP] + CO2 + CoA. It catalyses the reaction 2-methylpropanoyl-CoA + malonyl-[ACP] + H(+) = 4-methyl-3-oxopentanoyl-[ACP] + CO2 + CoA. The enzyme catalyses (2S)-2-methylbutanoyl-CoA + malonyl-[ACP] + H(+) = (4S)-4-methyl-3-oxohexanoyl-[ACP] + CO2 + CoA. It carries out the reaction malonyl-[ACP] + acetyl-CoA + H(+) = 3-oxobutanoyl-[ACP] + CO2 + CoA. The catalysed reaction is malonyl-[ACP] + propanoyl-CoA + H(+) = 3-oxopentanoyl-[ACP] + CO2 + CoA. It catalyses the reaction butanoyl-CoA + malonyl-[ACP] + H(+) = 3-oxohexanoyl-[ACP] + CO2 + CoA. The enzyme catalyses pentanoyl-CoA + malonyl-[ACP] + H(+) = 3-oxoheptanoyl-[ACP] + CO2 + CoA. It carries out the reaction hexanoyl-CoA + malonyl-[ACP] + H(+) = 3-oxooctanoyl-[ACP] + CO2 + CoA. The catalysed reaction is heptanoyl-CoA + malonyl-[ACP] + H(+) = 3-oxononanoyl-[ACP] + CO2 + CoA. It functions in the pathway lipid metabolism; fatty acid biosynthesis. Its function is as follows. Catalyzes the condensation reaction of fatty acid synthesis by the addition to an acyl acceptor of two carbons from malonyl-ACP. Catalyzes the first condensation reaction which initiates fatty acid synthesis and may therefore play a role in governing the total rate of fatty acid production. Possesses both acetoacetyl-ACP synthase and acetyl transacylase activities. Has some substrate specificity for branched chain acyl-CoA, determining the biosynthesis of branched-chain of fatty acids instead of straight-chain. The polypeptide is Beta-ketoacyl-[acyl-carrier-protein] synthase III 2 (Bacillus subtilis (strain 168)).